Here is a 112-residue protein sequence, read N- to C-terminus: Putative galactitol utilization operon repressor (112 aa).

One can recognise an HTH deoR-type domain in the interval 5–60; sequence SFERRNKIIQLVNEQGTVLVQDLAGVFAASEATIRADLRFLEQKGVVTRFHGGAAK. The H-T-H motif DNA-binding region spans 22–41; it reads VLVQDLAGVFAASEATIRAD.

Repressor of the gat operon for galacticol transport and metabolism. In K12 strains the operon is constitutively expressed because this gene is inactive. The protein is Putative galactitol utilization operon repressor (gatR) of Escherichia coli (strain K12).